A 300-amino-acid polypeptide reads, in one-letter code: Merozoite surface protein 2 (300 aa).

Positions 1 to 20 are cleaved as a signal peptide; that stretch reads MKVIKTLSIINFFIFVTFNI. Residues Asn22 and Asn36 are each glycosylated (N-linked (GlcNAc...) asparagine). Positions 44-226 are polymorphic region; the sequence is EESKPPTGAV…EQTESPELQS (183 aa). The stretch at 51 to 58 is one 1; inverted repeat; that stretch reads GAVAGSGA. Positions 51 to 110 are 7 X 8 AA tandem repeats of G-S-G-A-G-A-V-A; it reads GAVAGSGAGAGSGAGAVAGSGAGAVAGSGAGAVAGSGAGAVAGSGAGAVAGSGAVAGSGA. Tandem repeats lie at residues 61–68, 69–76, 77–84, 85–92, and 93–100. The 7; inverted repeat unit spans residues 103 to 110; sequence GAVAGSGA. The disordered stretch occupies residues 111 to 261; that stretch reads GNGANPGADA…DSQKECTDGN (151 aa). Over residues 123 to 148 the composition is skewed to low complexity; that stretch reads SPSTPATTTTTTTTNDAEASTSTSSE. The span at 149-165 shows a compositional bias: basic and acidic residues; sequence NRNHNNAETNPKGKGEV. Composition is skewed to polar residues over residues 167 to 193 and 200 to 228; these read KPNQANKETQNNSNVQQDSQTKSNVPR and KSPTAQPEQAENSAPTAEQTESPELQSAP. Asn177 carries an N-linked (GlcNAc...) asparagine glycan. N-linked (GlcNAc...) asparagine glycosylation is present at Asn249. A disulfide bond links Cys257 and Cys265. Asn273 and Asn274 each carry an N-linked (GlcNAc...) asparagine glycan. Residue Asn274 is the site of GPI-anchor amidated asparagine attachment. Positions 275-300 are cleaved as a propeptide — removed in mature form; the sequence is SSNIASINKFVVLISATLVLSFAIFI.

Its subcellular location is the cell membrane. Its function is as follows. May play a role in the merozoite attachment to the erythrocyte. The chain is Merozoite surface protein 2 from Plasmodium falciparum (isolate imr143).